The primary structure comprises 492 residues: Pentatricopeptide repeat-containing protein At4g21705, mitochondrial (492 aa).

Residues 1–17 constitute a mitochondrion transit peptide; the sequence is MNILRRIPANLIASRYY. PPR repeat units lie at residues 125-159, 160-194, 195-225, 231-261, 266-296, 301-335, 336-370, and 371-405; these read NDKTYGALLNCYVRQQNVEKSLLHFEKMKEMGFVT, SSLTYNNIMCLYTNIGQHEKVPKVLEEMKEENVAP, DNYSYRICINAFGAMYDLERIGGTLRDMERR, DWNTYAVAAKFYIDGGDCDRAVELLKMSENR, DGEGYNHLITLYARLGKKIEVLRLWDLEKDV, INQDYLTVLQSLVKIDALVEAEEVLTEWKSSGNCY, DFRVPNTVIRGYIGKSMEEKAEAMLEDLARRGKAT, and TPESWELVATAYAEKGTLENAFKCMKTALGVEVGS.

Belongs to the PPR family. P subfamily.

It is found in the mitochondrion. The sequence is that of Pentatricopeptide repeat-containing protein At4g21705, mitochondrial from Arabidopsis thaliana (Mouse-ear cress).